The chain runs to 296 residues: Phosphatidylserine decarboxylase proenzyme (296 aa).

Residues aspartate 113, histidine 169, and serine 256 each act as charge relay system; for autoendoproteolytic cleavage activity in the active site. Residue serine 256 is the Schiff-base intermediate with substrate; via pyruvic acid; for decarboxylase activity of the active site. At serine 256 the chain carries Pyruvic acid (Ser); by autocatalysis.

The protein belongs to the phosphatidylserine decarboxylase family. PSD-B subfamily. Prokaryotic type II sub-subfamily. In terms of assembly, heterodimer of a large membrane-associated beta subunit and a small pyruvoyl-containing alpha subunit. Pyruvate serves as cofactor. Post-translationally, is synthesized initially as an inactive proenzyme. Formation of the active enzyme involves a self-maturation process in which the active site pyruvoyl group is generated from an internal serine residue via an autocatalytic post-translational modification. Two non-identical subunits are generated from the proenzyme in this reaction, and the pyruvate is formed at the N-terminus of the alpha chain, which is derived from the carboxyl end of the proenzyme. The autoendoproteolytic cleavage occurs by a canonical serine protease mechanism, in which the side chain hydroxyl group of the serine supplies its oxygen atom to form the C-terminus of the beta chain, while the remainder of the serine residue undergoes an oxidative deamination to produce ammonia and the pyruvoyl prosthetic group on the alpha chain. During this reaction, the Ser that is part of the protease active site of the proenzyme becomes the pyruvoyl prosthetic group, which constitutes an essential element of the active site of the mature decarboxylase.

It is found in the cell membrane. It carries out the reaction a 1,2-diacyl-sn-glycero-3-phospho-L-serine + H(+) = a 1,2-diacyl-sn-glycero-3-phosphoethanolamine + CO2. The protein operates within phospholipid metabolism; phosphatidylethanolamine biosynthesis; phosphatidylethanolamine from CDP-diacylglycerol: step 2/2. Its function is as follows. Catalyzes the formation of phosphatidylethanolamine (PtdEtn) from phosphatidylserine (PtdSer). The protein is Phosphatidylserine decarboxylase proenzyme of Clostridium kluyveri (strain ATCC 8527 / DSM 555 / NBRC 12016 / NCIMB 10680 / K1).